Consider the following 322-residue polypeptide: Gluconeogenesis factor (322 aa).

Belongs to the gluconeogenesis factor family.

The protein resides in the cytoplasm. Required for morphogenesis under gluconeogenic growth conditions. This chain is Gluconeogenesis factor, found in Listeria innocua serovar 6a (strain ATCC BAA-680 / CLIP 11262).